Reading from the N-terminus, the 467-residue chain is Putative alpha-amylase (467 aa).

Glu145 acts as the Nucleophile in catalysis.

This sequence belongs to the glycosyl hydrolase 57 family.

It catalyses the reaction Endohydrolysis of (1-&gt;4)-alpha-D-glucosidic linkages in polysaccharides containing three or more (1-&gt;4)-alpha-linked D-glucose units.. The protein is Putative alpha-amylase of Methanocaldococcus jannaschii (strain ATCC 43067 / DSM 2661 / JAL-1 / JCM 10045 / NBRC 100440) (Methanococcus jannaschii).